Reading from the N-terminus, the 253-residue chain is Imidazole glycerol phosphate synthase subunit HisF (253 aa).

Residues D11 and D130 contribute to the active site.

The protein belongs to the HisA/HisF family. In terms of assembly, heterodimer of HisH and HisF.

The protein resides in the cytoplasm. It carries out the reaction 5-[(5-phospho-1-deoxy-D-ribulos-1-ylimino)methylamino]-1-(5-phospho-beta-D-ribosyl)imidazole-4-carboxamide + L-glutamine = D-erythro-1-(imidazol-4-yl)glycerol 3-phosphate + 5-amino-1-(5-phospho-beta-D-ribosyl)imidazole-4-carboxamide + L-glutamate + H(+). The protein operates within amino-acid biosynthesis; L-histidine biosynthesis; L-histidine from 5-phospho-alpha-D-ribose 1-diphosphate: step 5/9. IGPS catalyzes the conversion of PRFAR and glutamine to IGP, AICAR and glutamate. The HisF subunit catalyzes the cyclization activity that produces IGP and AICAR from PRFAR using the ammonia provided by the HisH subunit. This Roseobacter denitrificans (strain ATCC 33942 / OCh 114) (Erythrobacter sp. (strain OCh 114)) protein is Imidazole glycerol phosphate synthase subunit HisF.